An 83-amino-acid polypeptide reads, in one-letter code: Large ribosomal subunit protein bL31B (83 aa).

Belongs to the bacterial ribosomal protein bL31 family. Type B subfamily. Part of the 50S ribosomal subunit.

The polypeptide is Large ribosomal subunit protein bL31B (Tropheryma whipplei (strain TW08/27) (Whipple's bacillus)).